The chain runs to 64 residues: MAQEQTKRGGGGGDDEDVTGTTAAGQERREKLAQDTDDLLDEIDDVLEENAEDFVRAYVQKGGQ.

The disordered stretch occupies residues 1–37 (MAQEQTKRGGGGGDDEDVTGTTAAGQERREKLAQDTD). The ARC ATPase binding stretch occupies residues 21–58 (TTAAGQERREKLAQDTDDLLDEIDDVLEENAEDFVRAY). Residues 25-52 (GQERREKLAQDTDDLLDEIDDVLEENAE) adopt a coiled-coil conformation. Gln64 carries the deamidated glutamine modification. Gln64 is covalently cross-linked (Isoglutamyl lysine isopeptide (Gln-Lys) (interchain with K-? in acceptor proteins)).

It belongs to the prokaryotic ubiquitin-like protein family. In terms of assembly, strongly interacts with the proteasome-associated ATPase ARC through a hydrophobic interface; the interacting region of Pup lies in its C-terminal half. There is one Pup binding site per ARC hexamer ring. Is modified by deamidation of its C-terminal glutamine to glutamate by the deamidase Dop, a prerequisite to the subsequent pupylation process.

Its pathway is protein degradation; proteasomal Pup-dependent pathway. In terms of biological role, protein modifier that is covalently attached to lysine residues of substrate proteins, thereby targeting them for proteasomal degradation. The tagging system is termed pupylation. The sequence is that of Prokaryotic ubiquitin-like protein Pup from Mycobacterium marinum (strain ATCC BAA-535 / M).